A 351-amino-acid polypeptide reads, in one-letter code: Dihydroorotate dehydrogenase (quinone) (351 aa).

Residues 67-71 and threonine 91 each bind FMN; that span reads AGFDK. Lysine 71 provides a ligand contact to substrate. 116-120 contacts substrate; sequence NAMGF. The FMN site is built by asparagine 145 and asparagine 178. A substrate-binding site is contributed by asparagine 178. The active-site Nucleophile is serine 181. Asparagine 183 contributes to the substrate binding site. FMN is bound by residues lysine 214 and threonine 242. Residue 243-244 coordinates substrate; it reads NT. Residues glycine 262, glycine 291, and 312–313 contribute to the FMN site; that span reads YS.

The protein belongs to the dihydroorotate dehydrogenase family. Type 2 subfamily. As to quaternary structure, monomer. FMN is required as a cofactor.

It localises to the cell membrane. It catalyses the reaction (S)-dihydroorotate + a quinone = orotate + a quinol. The protein operates within pyrimidine metabolism; UMP biosynthesis via de novo pathway; orotate from (S)-dihydroorotate (quinone route): step 1/1. Its function is as follows. Catalyzes the conversion of dihydroorotate to orotate with quinone as electron acceptor. The sequence is that of Dihydroorotate dehydrogenase (quinone) from Helicobacter pylori (strain P12).